Reading from the N-terminus, the 216-residue chain is MTDAIDPDLIERGRKMFAGDWHFIWASPSIETLPPMGSVEIAFAGRSNVGKSSLINALTGRNALARTSHTPGRTQELIFFEGPPNAGLRLVDMPGYGYAAASKAKVASWTSLIHHFLQGRATLARVYVLIDGRHGLKDVDLDILKTLDKAAVSYQIVLTKADQVKAAELAERVTATVAALAKHPAAFPEVLTTSSRTGAGMPELRAAMIRLLDERR.

An EngB-type G domain is found at 37–214; that stretch reads GSVEIAFAGR…RAAMIRLLDE (178 aa). Residues 45-52, 72-76, 92-95, 159-162, and 193-195 each bind GTP; these read GRSNVGKS, GRTQE, DMPG, TKAD, and TSS. Positions 52 and 74 each coordinate Mg(2+).

This sequence belongs to the TRAFAC class TrmE-Era-EngA-EngB-Septin-like GTPase superfamily. EngB GTPase family. The cofactor is Mg(2+).

In terms of biological role, necessary for normal cell division and for the maintenance of normal septation. The polypeptide is Probable GTP-binding protein EngB (Rhodopseudomonas palustris (strain ATCC BAA-98 / CGA009)).